We begin with the raw amino-acid sequence, 215 residues long: Pyridoxine/pyridoxamine 5'-phosphate oxidase (215 aa).

Residues 11–14 and Lys69 contribute to the substrate site; that span reads RRDY. Residues 64–69, 79–80, Lys86, and Gln108 each bind FMN; these read RVVLLK and YT. Residues Tyr126, Arg130, and Ser134 each coordinate substrate. FMN-binding positions include 143–144 and Trp188; that span reads QS. Residue 194 to 196 participates in substrate binding; sequence RLH. FMN is bound at residue Arg198.

It belongs to the pyridoxamine 5'-phosphate oxidase family. Homodimer. FMN is required as a cofactor.

The catalysed reaction is pyridoxamine 5'-phosphate + O2 + H2O = pyridoxal 5'-phosphate + H2O2 + NH4(+). It catalyses the reaction pyridoxine 5'-phosphate + O2 = pyridoxal 5'-phosphate + H2O2. The protein operates within cofactor metabolism; pyridoxal 5'-phosphate salvage; pyridoxal 5'-phosphate from pyridoxamine 5'-phosphate: step 1/1. Its pathway is cofactor metabolism; pyridoxal 5'-phosphate salvage; pyridoxal 5'-phosphate from pyridoxine 5'-phosphate: step 1/1. In terms of biological role, catalyzes the oxidation of either pyridoxine 5'-phosphate (PNP) or pyridoxamine 5'-phosphate (PMP) into pyridoxal 5'-phosphate (PLP). The chain is Pyridoxine/pyridoxamine 5'-phosphate oxidase from Legionella pneumophila (strain Paris).